We begin with the raw amino-acid sequence, 135 residues long: C-type lectin BPL (135 aa).

Intrachain disulfides connect Cys-3/Cys-14, Cys-31/Cys-131, Cys-38/Cys-133, and Cys-106/Cys-123. Residues 10–132 (MNGLCYKIFN…CESKNAFLCQ (123 aa)) form the C-type lectin domain. Gln-96, Asp-98, Glu-104, and Asp-120 together coordinate Ca(2+). Residues 96-98 (QPD) carry the Galactose-binding motif.

It belongs to the true venom lectin family. As to quaternary structure, homodimer; disulfide-linked. In terms of tissue distribution, expressed by the venom gland.

It localises to the secreted. Galactose-binding protein which recognizes specific carbohydrate structures and agglutinates a variety of animal cells by binding to cell-surface glycoproteins and glycolipids. Calcium-dependent lectin. Shows high hemagglutinating activity in the presence of human erythrocytes, which are agglutinated with a minimum hemagglutination concentration (MHC) of 2.5-0.35 ug/ml. Causes indirect nephrotoxicity. Causes reductions in perfusion pressures, renal vascular resistance, urinary flow, glomerular filtration rate, sodium, potassium and chloride tubular transport. Its effects may be caused by the release of inflammatory mediators. The sequence is that of C-type lectin BPL from Bothrops pirajai (Piraja's lancehead).